The following is a 358-amino-acid chain: MALIMKYIDSMHHYMDKYGDPRTKDWPLMSSPFPTLALCLGYVYLVKVLGPRLMENRKPFQLRNTLILYNFVQVVFSAWLFYEIGISGWLTGHYNFRCQPVDYSNHPKTLRMVHACWWYYFSKFTEFFDTFFFVMRKKTSQVSTLHVIHHGCMPMSVWFGVKFTPGGHSTFFGLLNTFVHIVMYTYYLFTAMGPQFQKYLWWKKYLTSLQMVQFVAIMVHAFQLLFIDCNYPKAFVWWIGMHAVMFLFLFNEFYQSTYKATKRRRAAAAEARRLAAEEAKLQNGSAVSSNGSAITANGHHGKNGSVHHHSNGSATSNGTSLLSNGVGSNKAADYYVRGDLPAEIEITQRQPSSRNQVQ.

Transmembrane regions (helical) follow at residues 26–46 (WPLM…VYLV), 66–86 (LILY…EIGI), 115–135 (ACWW…FFVM), 147–167 (VIHH…TPGG), 171–191 (FFGL…LFTA), 207–227 (TSLQ…LLFI), and 234–254 (AFVW…NEFY). Over residues 285-295 (SAVSSNGSAIT) the composition is skewed to polar residues. The disordered stretch occupies residues 285-322 (SAVSSNGSAITANGHHGKNGSVHHHSNGSATSNGTSLL). Residues 299 to 310 (HHGKNGSVHHHS) show a composition bias toward basic residues. The span at 311-322 (NGSATSNGTSLL) shows a compositional bias: polar residues.

Belongs to the ELO family.

The protein resides in the membrane. It catalyses the reaction a very-long-chain acyl-CoA + malonyl-CoA + H(+) = a very-long-chain 3-oxoacyl-CoA + CO2 + CoA. Could be implicated in synthesis of very long chain fatty acids. The polypeptide is Very long chain fatty acid elongase AAEL008004 (Aedes aegypti (Yellowfever mosquito)).